Here is a 328-residue protein sequence, read N- to C-terminus: 3,4-dihydroxyphenylacetaldehyde synthase 2 (328 aa).

Asparagine 111 is a catalytic residue. Lysine 222 bears the N6-(pyridoxal phosphate)lysine mark.

Belongs to the group II decarboxylase family. It depends on pyridoxal 5'-phosphate as a cofactor.

The enzyme catalyses L-dopa + O2 + H2O + H(+) = 3,4-dihydroxyphenylacetaldehyde + H2O2 + NH4(+) + CO2. Catalyzes the decarboxylation-oxidative deamination of L-3,4-dihydroxyphenylalanine (L-DOPA) to 3,4-dihydroxylphenylacetaldehyde (DHPAA). Involved in cuticle development. Probably responsible for the protein cross-linking during the development of flexible cuticles. The protein is 3,4-dihydroxyphenylacetaldehyde synthase 2 (amd) of Drosophila simulans (Fruit fly).